Here is a 429-residue protein sequence, read N- to C-terminus: Cytochrome c biogenesis protein CcsB (429 aa).

Helical transmembrane passes span L14–L34, S72–K92, and V162–V182.

Belongs to the Ccs1/CcsB family. In terms of assembly, may interact with CcsA.

It localises to the cellular thylakoid membrane. Its function is as follows. Required during biogenesis of c-type cytochromes (cytochrome c6 and cytochrome f) at the step of heme attachment. The polypeptide is Cytochrome c biogenesis protein CcsB (Prochlorococcus marinus (strain SARG / CCMP1375 / SS120)).